The primary structure comprises 448 residues: Thymidine phosphorylase (448 aa).

Belongs to the thymidine/pyrimidine-nucleoside phosphorylase family. As to quaternary structure, homodimer.

The enzyme catalyses thymidine + phosphate = 2-deoxy-alpha-D-ribose 1-phosphate + thymine. It functions in the pathway pyrimidine metabolism; dTMP biosynthesis via salvage pathway; dTMP from thymine: step 1/2. Functionally, the enzymes which catalyze the reversible phosphorolysis of pyrimidine nucleosides are involved in the degradation of these compounds and in their utilization as carbon and energy sources, or in the rescue of pyrimidine bases for nucleotide synthesis. This Vibrio cholerae serotype O1 (strain ATCC 39315 / El Tor Inaba N16961) protein is Thymidine phosphorylase.